The chain runs to 334 residues: N-acetyl-gamma-glutamyl-phosphate reductase (334 aa).

The active site involves cysteine 154.

The protein belongs to the NAGSA dehydrogenase family. Type 1 subfamily.

It localises to the cytoplasm. The catalysed reaction is N-acetyl-L-glutamate 5-semialdehyde + phosphate + NADP(+) = N-acetyl-L-glutamyl 5-phosphate + NADPH + H(+). Its pathway is amino-acid biosynthesis; L-arginine biosynthesis; N(2)-acetyl-L-ornithine from L-glutamate: step 3/4. In terms of biological role, catalyzes the NADPH-dependent reduction of N-acetyl-5-glutamyl phosphate to yield N-acetyl-L-glutamate 5-semialdehyde. This chain is N-acetyl-gamma-glutamyl-phosphate reductase, found in Escherichia coli (strain K12).